Here is a 182-residue protein sequence, read N- to C-terminus: Large ribosomal subunit protein uL6 (182 aa).

It belongs to the universal ribosomal protein uL6 family. Part of the 50S ribosomal subunit.

In terms of biological role, this protein binds to the 23S rRNA, and is important in its secondary structure. It is located near the subunit interface in the base of the L7/L12 stalk, and near the tRNA binding site of the peptidyltransferase center. This is Large ribosomal subunit protein uL6 from Methanococcus maripaludis (strain C7 / ATCC BAA-1331).